The primary structure comprises 333 residues: NADH-quinone oxidoreductase subunit H (333 aa).

8 helical membrane passes run Phe-15–Tyr-35, Phe-88–Phe-108, Ile-117–Thr-137, Ile-159–Leu-179, Val-191–Glu-211, Phe-241–Phe-261, Phe-273–Trp-293, and Val-313–Phe-333.

Belongs to the complex I subunit 1 family. In terms of assembly, NDH-1 is composed of 14 different subunits. Subunits NuoA, H, J, K, L, M, N constitute the membrane sector of the complex.

It localises to the cell membrane. It carries out the reaction a quinone + NADH + 5 H(+)(in) = a quinol + NAD(+) + 4 H(+)(out). In terms of biological role, NDH-1 shuttles electrons from NADH, via FMN and iron-sulfur (Fe-S) centers, to quinones in the respiratory chain. The immediate electron acceptor for the enzyme in this species is believed to be ubiquinone. Couples the redox reaction to proton translocation (for every two electrons transferred, four hydrogen ions are translocated across the cytoplasmic membrane), and thus conserves the redox energy in a proton gradient. This subunit may bind ubiquinone. This is NADH-quinone oxidoreductase subunit H from Bacillus cytotoxicus (strain DSM 22905 / CIP 110041 / 391-98 / NVH 391-98).